Consider the following 392-residue polypeptide: Protein FAM53C (392 aa).

M1 bears the N-acetylmethionine mark. The disordered stretch occupies residues 78–119 (LRPPSRGNSPKEQPFSQVLRPEPPDPEKLPVPPAPPSKRHCR). Polar residues predominate over residues 83–93 (RGNSPKEQPFS). 6 positions are modified to phosphoserine: S122, S162, S232, S234, S255, and S273. Disordered regions lie at residues 141–167 (LWTPIKHRGSGGGGGPQVPHQSPPKRV) and 204–294 (RPCA…EDPR). Positions 241–256 (ASRFLPSARSSPASSP) are enriched in low complexity. The span at 278–294 (LDARKTGVKRRHEEDPR) shows a compositional bias: basic and acidic residues. The residue at position 299 (S299) is a Phosphoserine. The interval 341-364 (ASCSPTGGSSQVLSESEEEEEGAV) is disordered.

The protein belongs to the FAM53 family.

The protein is Protein FAM53C of Homo sapiens (Human).